The chain runs to 137 residues: MSSMTLFILFVSIIALLFLFINLIFAPHNPYQEKYSIFECGFHSFLGQNRTQFGVKFFIFALVYLLLDLEILLTFPFAVSEYVNNIYGLIILLGFITIITIGFVYELGKSALKIDSRQVITMTRFNYSSTIEYLGKI.

Helical transmembrane passes span 6–26 (LFILFVSIIALLFLFINLIFA), 57–77 (FFIFALVYLLLDLEILLTFPF), and 86–106 (IYGLIILLGFITIITIGFVYE).

This sequence belongs to the complex I subunit 3 family.

The protein localises to the mitochondrion membrane. The catalysed reaction is a ubiquinone + NADH + 5 H(+)(in) = a ubiquinol + NAD(+) + 4 H(+)(out). Its function is as follows. Core subunit of the mitochondrial membrane respiratory chain NADH dehydrogenase (Complex I) that is believed to belong to the minimal assembly required for catalysis. Complex I functions in the transfer of electrons from NADH to the respiratory chain. The immediate electron acceptor for the enzyme is believed to be ubiquinone. The sequence is that of NADH-ubiquinone oxidoreductase chain 3 (ND3) from Podospora anserina (strain S / ATCC MYA-4624 / DSM 980 / FGSC 10383) (Pleurage anserina).